The following is a 471-amino-acid chain: MTDLPDSTRWQLWIVAFGFFMQSLDTTIVNTALPSMAQSLGESPLHMHMVIVSYVLTVAVMLPASGWLADKVGVRNIFFTAIVLFTLGSLFCALSGTLNELLLARALQGVGGAMMVPVGRLTVMKIVPREQYMAAMTFVTLPGQVGPLLGPALGGLLVEYASWHWIFLINIPVGIIGAIATLMLMPNYTMQTRRFDLSGFLLLAVGMAVLTLALDGSKGTGFSPLAIAGLVAVGVVALVLYLLHAQNNNRALFSLKLFRTRTFSLGLAGSFAGRIGSGMLPFMTPVFLQIGLGFSPFHAGLMMIPMVLGSMGMKRIVVQVVNRFGYRRVLVATTLGLSLVTLLFMTTALLGWYYVLPFVLFLQGMVNSTRFSSMNTLTLKDLPDNLASSGNSLLSMIMQLSMSIGVTIAGLLLGLFGSQHVSVDSGTTQTVFMYTWLSMAFIIALPAFVFARVPSDTHQNVAISRRKRSAQ.

The Periplasmic segment spans residues 1 to 11; sequence MTDLPDSTRWQ. The helical transmembrane segment at 12 to 32 threads the bilayer; it reads LWIVAFGFFMQSLDTTIVNTA. Residues 33–48 lie on the Cytoplasmic side of the membrane; the sequence is LPSMAQSLGESPLHMH. The helical transmembrane segment at 49 to 69 threads the bilayer; it reads MVIVSYVLTVAVMLPASGWLA. At 70-76 the chain is on the periplasmic side; the sequence is DKVGVRN. A helical membrane pass occupies residues 77 to 97; it reads IFFTAIVLFTLGSLFCALSGT. Topologically, residues 98–101 are cytoplasmic; sequence LNEL. A helical membrane pass occupies residues 102–124; sequence LLARALQGVGGAMMVPVGRLTVM. Topologically, residues 125 to 137 are periplasmic; the sequence is KIVPREQYMAAMT. Residues 138 to 158 traverse the membrane as a helical segment; it reads FVTLPGQVGPLLGPALGGLLV. Topologically, residues 159–164 are cytoplasmic; that stretch reads EYASWH. A helical transmembrane segment spans residues 165 to 185; that stretch reads WIFLINIPVGIIGAIATLMLM. Residues 186 to 196 are Periplasmic-facing; the sequence is PNYTMQTRRFD. Residues 197–217 form a helical membrane-spanning segment; sequence LSGFLLLAVGMAVLTLALDGS. At 218–224 the chain is on the cytoplasmic side; that stretch reads KGTGFSP. A helical transmembrane segment spans residues 225-245; that stretch reads LAIAGLVAVGVVALVLYLLHA. Topologically, residues 246–262 are periplasmic; that stretch reads QNNNRALFSLKLFRTRT. Residues 263–283 form a helical membrane-spanning segment; the sequence is FSLGLAGSFAGRIGSGMLPFM. The Cytoplasmic portion of the chain corresponds to 284 to 285; it reads TP. A helical membrane pass occupies residues 286–306; sequence VFLQIGLGFSPFHAGLMMIPM. Residues 307-341 lie on the Periplasmic side of the membrane; it reads VLGSMGMKRIVVQVVNRFGYRRVLVATTLGLSLVT. A helical membrane pass occupies residues 342–362; that stretch reads LLFMTTALLGWYYVLPFVLFL. At 363–395 the chain is on the cytoplasmic side; it reads QGMVNSTRFSSMNTLTLKDLPDNLASSGNSLLS. A helical transmembrane segment spans residues 396 to 416; the sequence is MIMQLSMSIGVTIAGLLLGLF. Topologically, residues 417 to 430 are periplasmic; sequence GSQHVSVDSGTTQT. Residues 431–451 form a helical membrane-spanning segment; sequence VFMYTWLSMAFIIALPAFVFA. Over 452-471 the chain is Cytoplasmic; the sequence is RVPSDTHQNVAISRRKRSAQ.

Belongs to the major facilitator superfamily. TCR/Tet family.

It localises to the cell inner membrane. This chain is Putative multidrug resistance protein MdtD, found in Escherichia coli O45:K1 (strain S88 / ExPEC).